The primary structure comprises 86 residues: uncharacterized protein (86 aa).

2 4Fe-4S ferredoxin-type domains span residues 1–29 (MALL…IGDE) and 31–65 (YVID…PDPE). The [4Fe-4S] cluster site is built by Cys9, Cys12, Cys15, Cys19, Cys38, Cys41, Cys50, and Cys54.

The cofactor is [4Fe-4S] cluster.

This is an uncharacterized protein from Haemophilus influenzae (strain ATCC 51907 / DSM 11121 / KW20 / Rd).